Consider the following 742-residue polypeptide: Phosphoribosylformylglycinamidine synthase subunit PurL (742 aa).

The active site involves His54. ATP contacts are provided by Tyr57 and Lys96. Mg(2+) is bound at residue Glu98. Residues 99-102 and Arg121 each bind substrate; that span reads SHNH. His100 serves as the catalytic Proton acceptor. Residue Asp122 participates in Mg(2+) binding. Gln245 lines the substrate pocket. A Mg(2+)-binding site is contributed by Asp273. 317–319 is a binding site for substrate; the sequence is ESQ. 2 residues coordinate ATP: Asp500 and Gly537. Position 538 (Asn538) interacts with Mg(2+). Ser540 provides a ligand contact to substrate.

The protein belongs to the FGAMS family. In terms of assembly, monomer. Part of the FGAM synthase complex composed of 1 PurL, 1 PurQ and 2 PurS subunits.

Its subcellular location is the cytoplasm. It carries out the reaction N(2)-formyl-N(1)-(5-phospho-beta-D-ribosyl)glycinamide + L-glutamine + ATP + H2O = 2-formamido-N(1)-(5-O-phospho-beta-D-ribosyl)acetamidine + L-glutamate + ADP + phosphate + H(+). The protein operates within purine metabolism; IMP biosynthesis via de novo pathway; 5-amino-1-(5-phospho-D-ribosyl)imidazole from N(2)-formyl-N(1)-(5-phospho-D-ribosyl)glycinamide: step 1/2. Part of the phosphoribosylformylglycinamidine synthase complex involved in the purines biosynthetic pathway. Catalyzes the ATP-dependent conversion of formylglycinamide ribonucleotide (FGAR) and glutamine to yield formylglycinamidine ribonucleotide (FGAM) and glutamate. The FGAM synthase complex is composed of three subunits. PurQ produces an ammonia molecule by converting glutamine to glutamate. PurL transfers the ammonia molecule to FGAR to form FGAM in an ATP-dependent manner. PurS interacts with PurQ and PurL and is thought to assist in the transfer of the ammonia molecule from PurQ to PurL. The polypeptide is Phosphoribosylformylglycinamidine synthase subunit PurL (Geobacillus kaustophilus (strain HTA426)).